Reading from the N-terminus, the 419-residue chain is MDYKAPRRYYSHGVVARQQDFATDIVTRRRPYVPYDRPNKFSRSLVWTSKEYKSPEGNNMPRTNDVSPKPPVLGLARKNAACGPMRSSSLRKWVCKYWKDGKCKRGEQCQFLHSWSCFPGLAMVASLEGHNKELKGIALPEGSDKLFSVSIDGTLRVWDCNSGQCVHSINLDAEAGSLISEGPWVFLGLPNAIKAFNVQTSQDLHLQAAGVVGQVNAMTIANGMLFAGTSSGSILVWKATTDSESDPFKYLTSLEGHSGEVTCFAVGGQMLYSGSVDKTIKMWDLNTLQCIMTLKQHTGTVTSLLCWDKCLISSSLDGTIKVWAYSENGILKVVQTRRQEQSSVHALSGMHDAEAKPIIFCSYQNGTVGIFDLPSFQERGRMFSTHTIATLTIGPQGLLFSGDESGNLRVWTLAAGNKV.

Residues S89–S116 form a C3H1-type zinc finger. WD repeat units lie at residues G129 to S168, G210 to P247, G256 to T293, Q296 to Q335, and F383 to V419.

This is Zinc finger CCCH domain-containing protein 62 (ZFWD4) from Arabidopsis thaliana (Mouse-ear cress).